The sequence spans 292 residues: Acetyl-coenzyme A carboxylase carboxyl transferase subunit beta (292 aa).

Positions 29–292 constitute a CoA carboxyltransferase N-terminal domain; sequence LWSKCPECGQ…HGCESRVASS (264 aa). Cys-33, Cys-36, Cys-52, and Cys-55 together coordinate Zn(2+). A C4-type zinc finger spans residues 33-55; it reads CPECGQVVYRKDLLSNASVCGNC.

It belongs to the AccD/PCCB family. As to quaternary structure, acetyl-CoA carboxylase is a heterohexamer composed of biotin carboxyl carrier protein (AccB), biotin carboxylase (AccC) and two subunits each of ACCase subunit alpha (AccA) and ACCase subunit beta (AccD). Zn(2+) is required as a cofactor.

Its subcellular location is the cytoplasm. It catalyses the reaction N(6)-carboxybiotinyl-L-lysyl-[protein] + acetyl-CoA = N(6)-biotinyl-L-lysyl-[protein] + malonyl-CoA. The protein operates within lipid metabolism; malonyl-CoA biosynthesis; malonyl-CoA from acetyl-CoA: step 1/1. Its function is as follows. Component of the acetyl coenzyme A carboxylase (ACC) complex. Biotin carboxylase (BC) catalyzes the carboxylation of biotin on its carrier protein (BCCP) and then the CO(2) group is transferred by the transcarboxylase to acetyl-CoA to form malonyl-CoA. The polypeptide is Acetyl-coenzyme A carboxylase carboxyl transferase subunit beta (Synechococcus sp. (strain CC9311)).